The primary structure comprises 712 residues: Potassium transporter 1 (712 aa).

Over 1 to 19 the chain is Cytoplasmic; sequence MNQSPSLIEQGISQQHLKT. The chain crosses the membrane as a helical span at residues 20-40; the sequence is LSCANVLTLAYQSLGVIYGDL. At 41 to 67 the chain is on the extracellular side; the sequence is STSPLYVYKTTFSGKLSLHEDDEEIFG. Residues 68-88 traverse the membrane as a helical segment; sequence VFSFIFWTFTLIALFKYVFIV. Over 89–154 the chain is Cytoplasmic; sequence LSADDNGEGG…FFEKHPKSQK (66 aa). Residues 155–175 form a helical membrane-spanning segment; it reads CLLLFVLLGTCMAIGDSVLTP. Residues 176–189 lie on the Extracellular side of the membrane; sequence TISVLSAVSGVKLK. Residues 190-210 form a helical membrane-spanning segment; the sequence is IPNLHENYVVIIACIILVAIF. The Cytoplasmic portion of the chain corresponds to 211–219; the sequence is SVQRYGTHR. The helical transmembrane segment at 220–240 threads the bilayer; it reads VAFIFAPISTAWLLSISSIGV. At 241 to 267 the chain is on the extracellular side; the sequence is YNTIKWNPRIVSALSPVYMYKFLRSTG. A helical transmembrane segment spans residues 268-288; the sequence is VEGWVSLGGVVLSITGVETMF. Topologically, residues 289-300 are cytoplasmic; it reads ADLGHFSSLSIK. The helical transmembrane segment at 301-321 threads the bilayer; sequence VAFSFFVYPCLILAYMGEAAF. Residues 322–340 lie on the Extracellular side of the membrane; the sequence is LSKHHEDIQQSFYKAIPEP. Residues 341–361 traverse the membrane as a helical segment; sequence VFWPVFIVATFAAVVGSQAVI. Over 362 to 392 the chain is Cytoplasmic; the sequence is SATFSIISQCCALDCFPRVKIIHTSSKIHGQ. The chain crosses the membrane as a helical span at residues 393–413; that stretch reads IYIPEVNWMLMCLCLAVTIGL. Residues 414 to 424 are Extracellular-facing; it reads RDTNMMGHAYG. Residues 425 to 445 traverse the membrane as a helical segment; the sequence is LAVTSVMLVTTCLMTLVMTIV. Residues 446 to 449 are Cytoplasmic-facing; it reads WKQR. Residues 450–470 form a helical membrane-spanning segment; the sequence is IITVLAFVVFFGSIELLYFSS. At 471-474 the chain is on the extracellular side; that stretch reads CVYK. Residues 475–495 traverse the membrane as a helical segment; sequence VPEGGWIPILLSLTFMAVMYI. Residues 496-712 are Cytoplasmic-facing; the sequence is WNYGTTKKHE…LLEVGMVYYV (217 aa).

The protein belongs to the HAK/KUP transporter (TC 2.A.72.3) family. As to expression, detected in the whole mature plant but preferentially expressed in roots and stems, and in potassium-starved plants.

Its subcellular location is the cell membrane. Its function is as follows. High-affinity potassium transporter that could play a major role in the uptake of potassium from the rhizosphere. May act as a low-affinity potassium transporter under high potassium concentrations. Could also transport rubidium. The polypeptide is Potassium transporter 1 (POT1) (Arabidopsis thaliana (Mouse-ear cress)).